We begin with the raw amino-acid sequence, 622 residues long: Polypeptide N-acetylgalactosaminyltransferase 18 (622 aa).

Residues 1-12 (MVCTRKTKTLVS) are Cytoplasmic-facing. A helical; Signal-anchor for type II membrane protein membrane pass occupies residues 13 to 35 (TCVILSGMTNIICLLYVGWVTNY). Residues 36–622 (IASVYVRGQE…ITNVLRSLVS (587 aa)) are Lumenal-facing. Disulfide bonds link Cys-144/Cys-392, Cys-383/Cys-462, Cys-497/Cys-513, Cys-545/Cys-558, and Cys-586/Cys-606. N-linked (GlcNAc...) asparagine glycosylation occurs at Asn-146. The tract at residues 153 to 267 (LPEVSIVFIF…VGWAEPVLTR (115 aa)) is catalytic subdomain A. Residue Asp-194 participates in substrate binding. Asn-195 carries N-linked (GlcNAc...) asparagine glycosylation. Residues Asp-251 and His-253 each contribute to the Mn(2+) site. Residue Asn-320 is glycosylated (N-linked (GlcNAc...) asparagine). A catalytic subdomain B region spans residues 324–400 (PIRSPALIGC…PCSRIAHIER (77 aa)). His-397 is a Mn(2+) binding site. Residues Arg-400 and Tyr-405 each coordinate substrate. In terms of domain architecture, Ricin B-type lectin spans 484–614 (AYGVLQNSLK…KCSGQHWTIT (131 aa)).

The protein belongs to the glycosyltransferase 2 family. GalNAc-T subfamily. Requires Mn(2+) as cofactor.

It is found in the golgi apparatus membrane. The enzyme catalyses L-seryl-[protein] + UDP-N-acetyl-alpha-D-galactosamine = a 3-O-[N-acetyl-alpha-D-galactosaminyl]-L-seryl-[protein] + UDP + H(+). It carries out the reaction L-threonyl-[protein] + UDP-N-acetyl-alpha-D-galactosamine = a 3-O-[N-acetyl-alpha-D-galactosaminyl]-L-threonyl-[protein] + UDP + H(+). It participates in protein modification; protein glycosylation. Its function is as follows. Catalyzes the initial reaction in O-linked oligosaccharide biosynthesis, the transfer of an N-acetyl-D-galactosamine (GalNAc) residue from UDP-GalNAc to a serine or threonine residue on the protein receptor. This chain is Polypeptide N-acetylgalactosaminyltransferase 18 (Galnt18), found in Mus musculus (Mouse).